We begin with the raw amino-acid sequence, 307 residues long: ATP-dependent (S)-NAD(P)H-hydrate dehydratase (307 aa).

The YjeF C-terminal domain occupies 1–291 (MDHFIKLLPK…DEIPKLVRDV (291 aa)). (6S)-NADPHX is bound by residues Gly-96 and 150–156 (NIVEFSR). Residues 194–198 (KGEVD) and 214–223 (SSLRRCGGQG) each bind ATP. (6S)-NADPHX is bound at residue Asp-224.

Belongs to the NnrD/CARKD family. Mg(2+) serves as cofactor.

The enzyme catalyses (6S)-NADHX + ATP = ADP + phosphate + NADH + H(+). The catalysed reaction is (6S)-NADPHX + ATP = ADP + phosphate + NADPH + H(+). Its function is as follows. Catalyzes the dehydration of the S-form of NAD(P)HX at the expense of ATP, which is converted to ADP. Together with NAD(P)HX epimerase, which catalyzes the epimerization of the S- and R-forms, the enzyme allows the repair of both epimers of NAD(P)HX, a damaged form of NAD(P)H that is a result of enzymatic or heat-dependent hydration. This chain is ATP-dependent (S)-NAD(P)H-hydrate dehydratase, found in Caenorhabditis elegans.